We begin with the raw amino-acid sequence, 480 residues long: Sensor histidine kinase CusS (480 aa).

Topologically, residues 1–15 (MVSKPFQRPFSLATR) are cytoplasmic. The helical transmembrane segment at 16–36 (LTFFISLATIAAFFAFAWIMI) threads the bilayer. Residues 37–186 (HSVKVHFAEQ…LHYINDLMNK (150 aa)) lie on the Periplasmic side of the membrane. Residues 187-207 (LIMTASVISILIVFIVLLAVH) form a helical membrane-spanning segment. The region spanning 207–260 (HKGHAPIRSVSRQIQNITSKDLDVRLDPQTVPIELEQLVLSFNHMIERIEDVFT) is the HAMP domain. The Cytoplasmic portion of the chain corresponds to 208-480 (KGHAPIRSVS…GTRFVIILPA (273 aa)). Positions 268–480 (DIAHEIRTPI…GTRFVIILPA (213 aa)) constitute a Histidine kinase domain. Histidine 271 bears the Phosphohistidine; by autocatalysis mark.

Post-translationally, autophosphorylated.

It localises to the cell inner membrane. The enzyme catalyses ATP + protein L-histidine = ADP + protein N-phospho-L-histidine.. Member of the two-component regulatory system CusS/CusR involved in response to copper and silver. Acts as a copper/silver ion sensor. Activates CusR by phosphorylation. The protein is Sensor histidine kinase CusS (cusS) of Escherichia coli O6:H1 (strain CFT073 / ATCC 700928 / UPEC).